A 607-amino-acid chain; its full sequence is Chaperone protein DnaK (607 aa).

Residue Thr-174 is modified to Phosphothreonine; by autocatalysis. The disordered stretch occupies residues 577-607; it reads GYTASGPQGGPNPGGGQSGPDGNVNTDYKVY. Over residues 583 to 595 the composition is skewed to gly residues; sequence PQGGPNPGGGQSG.

This sequence belongs to the heat shock protein 70 family.

Acts as a chaperone. This is Chaperone protein DnaK from Caldicellulosiruptor bescii (strain ATCC BAA-1888 / DSM 6725 / KCTC 15123 / Z-1320) (Anaerocellum thermophilum).